The sequence spans 226 residues: Urease accessory protein UreF (226 aa).

Belongs to the UreF family. UreD, UreF and UreG form a complex that acts as a GTP-hydrolysis-dependent molecular chaperone, activating the urease apoprotein by helping to assemble the nickel containing metallocenter of UreC. The UreE protein probably delivers the nickel.

It localises to the cytoplasm. Its function is as follows. Required for maturation of urease via the functional incorporation of the urease nickel metallocenter. The chain is Urease accessory protein UreF from Burkholderia lata (strain ATCC 17760 / DSM 23089 / LMG 22485 / NCIMB 9086 / R18194 / 383).